The chain runs to 301 residues: Diaminopimelate epimerase (301 aa).

3 residues coordinate substrate: Asn15, Gln47, and Asn67. Cys76 functions as the Proton donor in the catalytic mechanism. Substrate-binding positions include 77–78, Asn163, Asn197, and 215–216; these read GN and ER. The active-site Proton acceptor is the Cys224. 225-226 contributes to the substrate binding site; that stretch reads GS.

Belongs to the diaminopimelate epimerase family. In terms of assembly, homodimer.

The protein localises to the cytoplasm. It carries out the reaction (2S,6S)-2,6-diaminopimelate = meso-2,6-diaminopimelate. The protein operates within amino-acid biosynthesis; L-lysine biosynthesis via DAP pathway; DL-2,6-diaminopimelate from LL-2,6-diaminopimelate: step 1/1. Its function is as follows. Catalyzes the stereoinversion of LL-2,6-diaminopimelate (L,L-DAP) to meso-diaminopimelate (meso-DAP), a precursor of L-lysine and an essential component of the bacterial peptidoglycan. The protein is Diaminopimelate epimerase of Rhizobium etli (strain ATCC 51251 / DSM 11541 / JCM 21823 / NBRC 15573 / CFN 42).